The primary structure comprises 126 residues: Large ribosomal subunit protein bL17 (126 aa).

Belongs to the bacterial ribosomal protein bL17 family. In terms of assembly, part of the 50S ribosomal subunit. Contacts protein L32.

In Coxiella burnetii (strain CbuK_Q154) (Coxiella burnetii (strain Q154)), this protein is Large ribosomal subunit protein bL17.